The sequence spans 270 residues: BPI fold-containing family A member 1 (270 aa).

The first 19 residues, 1–19 (MFLVGSLVVLCGLLAQSTA), serve as a signal peptide directing secretion. Positions 104–109 (LVGGLL) are important for surfactant activity and antibacterial properties. Asparagine 174 carries N-linked (GlcNAc...) asparagine glycosylation. A disulfide bond links cysteine 196 and cysteine 238.

This sequence belongs to the BPI/LBP/Plunc superfamily. Plunc family. As to quaternary structure, monomer. Interacts (via N-terminus) with SCNN1B, a subunit of the heterotrimeric epithelial sodium channel (ENaC); this inhibits proteolytic activation of ENaC. As to expression, detected in adult nasal epithelium, heart, lung, spleen, testis and salivary gland, and in embryonic nasal epithelium, lung, salivary gland and thymus.

The protein resides in the secreted. In terms of biological role, lipid-binding protein which shows high specificity for the surfactant phospholipid dipalmitoylphosphatidylcholine (DPPC). Plays a role in the innate immune responses of the upper airways. Reduces the surface tension in secretions from airway epithelia and inhibits the formation of biofilm by pathogenic Gram-negative bacteria, such as P.aeruginosa and K.pneumoniae. Negatively regulates proteolytic cleavage of SCNN1G, an event that is required for activation of the epithelial sodium channel (ENaC), and thereby contributes to airway surface liquid homeostasis and proper clearance of mucus. Plays a role in the airway inflammatory response after exposure to irritants. May attract macrophages and neutrophils. In Rattus norvegicus (Rat), this protein is BPI fold-containing family A member 1 (Bpifa1).